The sequence spans 186 residues: Tetratricopeptide repeat protein 36 (186 aa).

3 TPR repeats span residues 48–81, 83–115, and 120–153; these read SKAL…LPDR, SAYN…SGGR, and RQSF…GSPF.

It belongs to the TTC36 family.

This chain is Tetratricopeptide repeat protein 36 (Ttc36), found in Mus musculus (Mouse).